The sequence spans 193 residues: V-type ATP synthase subunit E (193 aa).

It belongs to the V-ATPase E subunit family.

Functionally, produces ATP from ADP in the presence of a proton gradient across the membrane. The protein is V-type ATP synthase subunit E of Anaeromyxobacter sp. (strain Fw109-5).